Consider the following 122-residue polypeptide: Ribosome-binding factor A (122 aa).

It belongs to the RbfA family. As to quaternary structure, monomer. Binds 30S ribosomal subunits, but not 50S ribosomal subunits or 70S ribosomes.

Its subcellular location is the cytoplasm. In terms of biological role, one of several proteins that assist in the late maturation steps of the functional core of the 30S ribosomal subunit. Associates with free 30S ribosomal subunits (but not with 30S subunits that are part of 70S ribosomes or polysomes). Required for efficient processing of 16S rRNA. May interact with the 5'-terminal helix region of 16S rRNA. This is Ribosome-binding factor A from Burkholderia mallei (strain NCTC 10229).